The sequence spans 245 residues: Short-chain dehydrogenase/reductase pyiH (245 aa).

Residues Ile-18, Arg-42, Asp-68, and Asn-95 each contribute to the NADP(+) site. Residue Ser-150 is the Proton donor of the active site.

This sequence belongs to the short-chain dehydrogenases/reductases (SDR) family.

It functions in the pathway mycotoxin biosynthesis. In terms of biological role, short-chain dehydrogenase/reductase; part of the gene cluster that mediates the biosynthesis of the mycotoxin pyrichalasin H, a tyrosine-derived cytochalasan that inhibits the growth of rice seedlings, but also inhibits lymphocyte capping and actin polymerization and alters cell morphology. Pyrichalasin H is indicated as the responsible agent for the genus-specific pathogenicity of M.grisea toward crabgrass. The first step in the pathway is catalyzed by the O-methyltransferase pyiA which methylates free tyrosine to generate the precursor O-methyltyrosine. The hybrid PKS-NRPS pyiS, assisted by the enoyl reductase pyiC, are responsible for fusion of the O-methyltyrosine precursor and the polyketide backbone. The polyketide synthase module (PKS) of pyiS is responsible for the synthesis of the polyketide backbone and the downstream nonribosomal peptide synthetase (NRPS) amidates the carboxyl end of the polyketide with the O-methyltyrosine precursor. As the NRPS A-domain demonstrates substrate tolerance, pyiS can also use phenylalanine, tyrosine and even para-chlorophenylalanine as amino acid precursor, which leads to the production of novel cytochalasans, including halogenated cytochalasans. Because pyiS lacks a designated enoylreductase (ER) domain, the required activity is provided the enoyl reductase pyiC. Reduction by the hydrolyase pyiE leads to 1,5-dihydropyrrolone, which is substrate for dehydration and intra-molecular Diels-Alder cyclization by the Diels-Alderase pyiF to yield the required isoindolone-fused macrocycle. The tailoring cytochrome P450 monooxygenases piyD and piyG catalyze the hydroxylation at C-18 and C-7, respectivily, whereas the short-chain dehydrogenase/reductase pyiH reduces the carbonyl at C-21 in preparation for the transfer of an acetyl group by the acetyltransferase pyiB. These 3 reactions whose order is not clear yet, lead to the production of O-methylpyrichalasin J, a deacetylated pyrichalasin H. Finally, pyiB to converts O-methylpyrichalasin J into the final product pyrichalasin H via acetylation of C-21. The polypeptide is Short-chain dehydrogenase/reductase pyiH (Pyricularia grisea (Crabgrass-specific blast fungus)).